The sequence spans 300 residues: MNHDYGRLVSRAALAATLVATLLLIIKIFAWWYTGSVSILAALVDSLVDIAASLTNLLVVRYSLQPADEEHTFGHGKAESLAALAQSMFISGSALFLFLTGIQHLITPEPMRAPLVGIVVTVAALVTTLMLVTFQRWVVRKTRSQAVRADMLHYQSDVMMNGAILVALALSWYGLHRADALFALGIGVWILYSALRMGYEAIQSLLDRALPDDERQAIVDIVAAWPGVRGAHDLRTRQSGPTRFIQLHLEMEDNLPLVQAHLIAEQVEQAILSRFPGSDVIIHQDPCSVVPRFQQGQFEH.

4 helical membrane-spanning segments follow: residues 12 to 32, 39 to 59, 82 to 102, and 114 to 134; these read AALA…FAWW, ILAA…NLLV, AALA…LTGI, and PLVG…LVTF. Positions 45 and 49 each coordinate Zn(2+). Zn(2+) contacts are provided by histidine 153 and aspartate 157. 2 consecutive transmembrane segments (helical) span residues 156-176 and 182-202; these read SDVM…YGLH and FALG…YEAI.

Belongs to the cation diffusion facilitator (CDF) transporter (TC 2.A.4) family. FieF subfamily. As to quaternary structure, homodimer.

It localises to the cell inner membrane. It carries out the reaction Zn(2+)(in) + H(+)(out) = Zn(2+)(out) + H(+)(in). The catalysed reaction is Cd(2+)(in) + H(+)(out) = Cd(2+)(out) + H(+)(in). The enzyme catalyses Fe(2+)(in) + H(+)(out) = Fe(2+)(out) + H(+)(in). Functionally, divalent metal cation transporter which exports Zn(2+), Cd(2+) and possibly Fe(2+). May be involved in zinc and iron detoxification by efflux. This Cronobacter sakazakii (strain ATCC BAA-894) (Enterobacter sakazakii) protein is Cation-efflux pump FieF.